Reading from the N-terminus, the 551-residue chain is MNRRRFIKGSMAMAAVCGSSGIASLFSQAAFAAESDIADGKIVRFDFAGLQSMAQALAKKPWGGAPGPLPDTLANLTPQAYNSIQYDAAHSLWNGVANRQLDIQFFHVGMGFRRRVRMFSVDTTTHLAREIHFRPELFKYNDAGVDTTQLEGQSDLGFAGFRVFKAPELARRDVVSFLGASYFRAVDDTYQYGLSARGLAIDTYTDGQEEFPDFTAFWFDTAKPGDTTFTVYALLDSASVTGAYKFVIHCEKSQVIMDVENHLYARKDIKQLGIAPMTSMFSCGNNERRVCDTIHPQIHDSDRLAMWRGNGEWICRPLNNPQKLQFNAYMDDNPKGFGLLQLDRDFSHYQDVMGWYNKRPSLWVEPRSKWGKGAVSLMEIPTTGETLDNVVCFWQPEKAIKAGDTLAFNYRLYWSAQPPVQSPLARVMATRTGMGGFPEGWAPGEHYPDKWARRFAIDFVGGDLKAAAPKGIEPVITLSSGEAKQIEILYVEPFDGYRIQFDWYPTSDSTAPVDMRMFLRCQGEAISETWLYQYFPPAPDKRRYVDDRIMR.

A signal peptide (tat-type signal) is located at residues Met-1 to Ala-32.

It belongs to the OpgD/OpgG family. Post-translationally, predicted to be exported by the Tat system. The position of the signal peptide cleavage has not been experimentally proven.

It is found in the periplasm. The protein operates within glycan metabolism; osmoregulated periplasmic glucan (OPG) biosynthesis. Its function is as follows. Probably involved in the control of the structural glucose backbone of osmoregulated periplasmic glucans (OPGs). This chain is Glucans biosynthesis protein D, found in Salmonella enteritidis PT4 (strain P125109).